Here is a 152-residue protein sequence, read N- to C-terminus: Protein Turandot X (152 aa).

Residues 1–22 (MGFYISSLLICVFLGIVRFASA) form the signal peptide.

The protein belongs to the Turandot family.

Its subcellular location is the secreted. In terms of biological role, a humoral factor that may play a role in stress tolerance. The sequence is that of Protein Turandot X from Drosophila erecta (Fruit fly).